A 197-amino-acid polypeptide reads, in one-letter code: FMN-dependent NADH:quinone oxidoreductase (197 aa).

FMN contacts are provided by residues Ser10, 16-18 (SQS), 93-96 (MYNF), and 137-140 (TRGG).

The protein belongs to the azoreductase type 1 family. In terms of assembly, homodimer. Requires FMN as cofactor.

It carries out the reaction 2 a quinone + NADH + H(+) = 2 a 1,4-benzosemiquinone + NAD(+). It catalyses the reaction N,N-dimethyl-1,4-phenylenediamine + anthranilate + 2 NAD(+) = 2-(4-dimethylaminophenyl)diazenylbenzoate + 2 NADH + 2 H(+). Functionally, quinone reductase that provides resistance to thiol-specific stress caused by electrophilic quinones. In terms of biological role, also exhibits azoreductase activity. Catalyzes the reductive cleavage of the azo bond in aromatic azo compounds to the corresponding amines. This Shewanella frigidimarina (strain NCIMB 400) protein is FMN-dependent NADH:quinone oxidoreductase.